The following is a 385-amino-acid chain: 3-hydroxyisobutyryl-CoA hydrolase, mitochondrial (385 aa).

Glutamate 120, glycine 145, glutamate 168, and aspartate 176 together coordinate substrate.

Belongs to the enoyl-CoA hydratase/isomerase family.

It is found in the mitochondrion. The catalysed reaction is 3-hydroxy-2-methylpropanoyl-CoA + H2O = 3-hydroxy-2-methylpropanoate + CoA + H(+). It participates in amino-acid degradation; L-valine degradation. In terms of biological role, hydrolyzes 3-hydroxyisobutyryl-CoA (HIBYL-CoA), a saline catabolite. Has high activity toward isobutyryl-CoA. Could be an isobutyryl-CoA dehydrogenase that functions in valine catabolism. Also hydrolyzes 3-hydroxypropanoyl-CoA. The chain is 3-hydroxyisobutyryl-CoA hydrolase, mitochondrial (hibch) from Xenopus tropicalis (Western clawed frog).